The primary structure comprises 118 residues: Large ribosomal subunit protein bL20 (118 aa).

Belongs to the bacterial ribosomal protein bL20 family.

Its function is as follows. Binds directly to 23S ribosomal RNA and is necessary for the in vitro assembly process of the 50S ribosomal subunit. It is not involved in the protein synthesizing functions of that subunit. The chain is Large ribosomal subunit protein bL20 (rplT) from Buchnera aphidicola subsp. Acyrthosiphon pisum (strain APS) (Acyrthosiphon pisum symbiotic bacterium).